A 2094-amino-acid polypeptide reads, in one-letter code: Protein Ycf2 (2094 aa).

ATP is bound at residue 1385-1392 (GPPETGRS).

It belongs to the Ycf2 family.

It is found in the plastid. The protein localises to the chloroplast stroma. Its function is as follows. Probable ATPase of unknown function. Its presence in a non-photosynthetic plant (Epifagus virginiana) and experiments in tobacco indicate that it has an essential function which is probably not related to photosynthesis. The polypeptide is Protein Ycf2 (Huperzia lucidula (Shining clubmoss)).